The following is a 492-amino-acid chain: Probable cytosol aminopeptidase (492 aa).

Residues Lys-259 and Asp-264 each coordinate Mn(2+). Lys-271 is a catalytic residue. Mn(2+)-binding residues include Asp-283, Asp-342, and Glu-344. The active site involves Arg-346.

It belongs to the peptidase M17 family. Requires Mn(2+) as cofactor.

The protein resides in the cytoplasm. It catalyses the reaction Release of an N-terminal amino acid, Xaa-|-Yaa-, in which Xaa is preferably Leu, but may be other amino acids including Pro although not Arg or Lys, and Yaa may be Pro. Amino acid amides and methyl esters are also readily hydrolyzed, but rates on arylamides are exceedingly low.. The catalysed reaction is Release of an N-terminal amino acid, preferentially leucine, but not glutamic or aspartic acids.. Functionally, presumably involved in the processing and regular turnover of intracellular proteins. Catalyzes the removal of unsubstituted N-terminal amino acids from various peptides. The sequence is that of Probable cytosol aminopeptidase (pepA) from Synechocystis sp. (strain ATCC 27184 / PCC 6803 / Kazusa).